The primary structure comprises 276 residues: Transcriptional antiactivator ExsD (276 aa).

Can form homotrimer. Interacts with ExsA; this interaction inhibits ExsA activity. Interacts with ExsC; this interaction dissociates the ExsD-ExsA complex.

Negative regulator of the type III secretion system regulon. Acts by disrupting transcriptional activator ExsA self-association and DNA-binding activity in absence of inducing signals. Upon host cell contact, this interaction is disrupted by the anti-antiactivator protein ExsC leading to ExsA activation. The polypeptide is Transcriptional antiactivator ExsD (exsD) (Pseudomonas aeruginosa (strain ATCC 15692 / DSM 22644 / CIP 104116 / JCM 14847 / LMG 12228 / 1C / PRS 101 / PAO1)).